The primary structure comprises 227 residues: Cytochrome c oxidase subunit 2 (227 aa).

At 1–14 (MAYPFQLGLQDATS) the chain is on the mitochondrial intermembrane side. Residues 15–45 (PIMEELTSFHDHTLMIVFLISSLVLYIILLM) form a helical membrane-spanning segment. The Mitochondrial matrix segment spans residues 46–59 (LTTKLTHTSTMDAQ). A helical transmembrane segment spans residues 60-87 (EVETIWTILPAVILILIALPSLRILYMM). Topologically, residues 88–227 (DEINNPALTV…HFENWSASMI (140 aa)) are mitochondrial intermembrane. Residues H161, C196, E198, C200, H204, and M207 each coordinate Cu cation. Position 198 (E198) interacts with Mg(2+).

This sequence belongs to the cytochrome c oxidase subunit 2 family. Component of the cytochrome c oxidase (complex IV, CIV), a multisubunit enzyme composed of 14 subunits. The complex is composed of a catalytic core of 3 subunits MT-CO1, MT-CO2 and MT-CO3, encoded in the mitochondrial DNA, and 11 supernumerary subunits COX4I, COX5A, COX5B, COX6A, COX6B, COX6C, COX7A, COX7B, COX7C, COX8 and NDUFA4, which are encoded in the nuclear genome. The complex exists as a monomer or a dimer and forms supercomplexes (SCs) in the inner mitochondrial membrane with NADH-ubiquinone oxidoreductase (complex I, CI) and ubiquinol-cytochrome c oxidoreductase (cytochrome b-c1 complex, complex III, CIII), resulting in different assemblies (supercomplex SCI(1)III(2)IV(1) and megacomplex MCI(2)III(2)IV(2)). Found in a complex with TMEM177, COA6, COX18, COX20, SCO1 and SCO2. Interacts with TMEM177 in a COX20-dependent manner. Interacts with COX20. Interacts with COX16. Cu cation serves as cofactor.

The protein resides in the mitochondrion inner membrane. The catalysed reaction is 4 Fe(II)-[cytochrome c] + O2 + 8 H(+)(in) = 4 Fe(III)-[cytochrome c] + 2 H2O + 4 H(+)(out). Component of the cytochrome c oxidase, the last enzyme in the mitochondrial electron transport chain which drives oxidative phosphorylation. The respiratory chain contains 3 multisubunit complexes succinate dehydrogenase (complex II, CII), ubiquinol-cytochrome c oxidoreductase (cytochrome b-c1 complex, complex III, CIII) and cytochrome c oxidase (complex IV, CIV), that cooperate to transfer electrons derived from NADH and succinate to molecular oxygen, creating an electrochemical gradient over the inner membrane that drives transmembrane transport and the ATP synthase. Cytochrome c oxidase is the component of the respiratory chain that catalyzes the reduction of oxygen to water. Electrons originating from reduced cytochrome c in the intermembrane space (IMS) are transferred via the dinuclear copper A center (CU(A)) of subunit 2 and heme A of subunit 1 to the active site in subunit 1, a binuclear center (BNC) formed by heme A3 and copper B (CU(B)). The BNC reduces molecular oxygen to 2 water molecules using 4 electrons from cytochrome c in the IMS and 4 protons from the mitochondrial matrix. This chain is Cytochrome c oxidase subunit 2 (MT-CO2), found in Anisomys imitator (Uneven-toothed rat).